The following is a 402-amino-acid chain: Zinc finger protein 587B (402 aa).

The region spanning 15–91 is the KRAB domain; the sequence is VTFEDVAVKF…PVTGVSPKKA (77 aa). The C2H2-type 1 zinc finger occupies 92–114; the sequence is HPCEMCGPILGDILHVADHQGTH. The C2H2-type 2; degenerate zinc finger occupies 120–142; sequence HRCEAWGNKLYDSGNFHQHQNEH. Residues Lys177, Lys200, and Lys253 each participate in a glycyl lysine isopeptide (Lys-Gly) (interchain with G-Cter in SUMO2) cross-link. 5 C2H2-type zinc fingers span residues 242-264, 270-292, 298-320, 326-348, and 354-383; these read YVCC…QRVH, YECG…QQFH, YGCE…QKVH, YECG…QRIH, and YKCG…WVDH. Residue Lys366 forms a Glycyl lysine isopeptide (Lys-Gly) (interchain with G-Cter in SUMO2) linkage.

It belongs to the krueppel C2H2-type zinc-finger protein family.

Its subcellular location is the nucleus. May be involved in transcriptional regulation. The sequence is that of Zinc finger protein 587B (ZNF587B) from Homo sapiens (Human).